The following is a 273-amino-acid chain: Type II iodothyronine deiodinase (273 aa).

Topologically, residues 1-9 are lumenal; sequence MGILSVDLL. The helical; Signal-anchor for type III membrane protein transmembrane segment at 10–34 threads the bilayer; the sequence is ITLQILPVFFSNCLFLALYDSVILL. Residues 35-273 lie on the Cytoplasmic side of the membrane; the sequence is KHVVLLLSRS…KRUKKTRLAG (239 aa). The active site involves selenocysteine 133. 2 non-standard amino acids (selenocysteine) are found at residues selenocysteine 133 and selenocysteine 266.

The protein belongs to the iodothyronine deiodinase family. In terms of assembly, predominantly monomer. Can form homodimers but homodimerization is not essential for enzyme activity. Interacts with USP20 and USP33. Interacts with MARCHF6. In terms of processing, ubiquitinated by MARCHF6, leading to its degradation by the proteasome. Deubiquitinated by USP20 and USP33. Isoform 1 is expressed in the lung, trachea, kidney, heart, skeletal muscle, placenta, fetal brain and several regions of the adult brain. Isoform 2 is expressed in the brain, heart, kidney and trachea.

The protein resides in the endoplasmic reticulum membrane. The catalysed reaction is 3,3',5-triiodo-L-thyronine + iodide + A + H(+) = L-thyroxine + AH2. It carries out the reaction 3,3'-diiodo-L-thyronine + iodide + A + H(+) = 3,3',5'-triiodo-L-thyronine + AH2. The enzyme catalyses 3'-iodo-L-thyronine + iodide + A + H(+) = 3',5'-diiodo-L-thyronine + AH2. It catalyses the reaction 3,3'-diiodothyronamine + iodide + A + H(+) = 3,3',5'-triiodothyronamine + AH2. The catalysed reaction is 3'-iodothyronamine + iodide + A + H(+) = 3',5'-diiodothyronamine + AH2. Plays a crucial role in the metabolism of thyroid hormones (TH) and has specific roles in TH activation and inactivation by deiodination. Catalyzes the deiodination of L-thyroxine (T4) to 3,5,3'-triiodothyronine (T3), 3,3',5'-triiodothyronine (rT3) to 3,3'-diiodothyronine (3,3'-T2) and 3',5'-diiodothyronine (3',5'-T2) to 3'-monoiodothyronine (3'-T1) via outer-ring deiodination (ORD). Catalyzes the phenolic ring deiodinations of 3,3',5'-triiodothyronamine and 3',5'- diiodothyronamine. This Homo sapiens (Human) protein is Type II iodothyronine deiodinase (DIO2).